We begin with the raw amino-acid sequence, 305 residues long: Membrane glycoprotein UL142 (305 aa).

The signal sequence occupies residues 1-19 (MRIEWACWLFGYFVSSVGS). Residues 20–270 (ERSLSYRYHL…QKTNNTTSPW (251 aa)) are Lumenal-facing. A helical transmembrane segment spans residues 271–288 (VYAIPMGATATIGAGLYI). Over 289–305 (GKHFTPVKFVYEVWRGQ) the chain is Cytoplasmic.

In terms of assembly, interacts with host MICA and ULBP3.

The protein localises to the host endoplasmic reticulum membrane. The protein resides in the host Golgi apparatus membrane. Participates in the inhibition of the host immune response. Prevents host NK cell-mediated lysis of the infected cell by preventing the KLRK1 ligand 3/ULBP3 trafficking to the cell surface. Also retains another KLRK1 ligand, MHC class I-related chain A/MICA, in the Golgi apparatus to avoid its surface expression. This Homo sapiens (Human) protein is Membrane glycoprotein UL142 (UL142).